The chain runs to 355 residues: UDP-3-O-acylglucosamine N-acyltransferase (355 aa).

The active-site Proton acceptor is the histidine 258.

The protein belongs to the transferase hexapeptide repeat family. LpxD subfamily. In terms of assembly, homotrimer.

It carries out the reaction a UDP-3-O-[(3R)-3-hydroxyacyl]-alpha-D-glucosamine + a (3R)-hydroxyacyl-[ACP] = a UDP-2-N,3-O-bis[(3R)-3-hydroxyacyl]-alpha-D-glucosamine + holo-[ACP] + H(+). It participates in bacterial outer membrane biogenesis; LPS lipid A biosynthesis. Catalyzes the N-acylation of UDP-3-O-acylglucosamine using 3-hydroxyacyl-ACP as the acyl donor. Is involved in the biosynthesis of lipid A, a phosphorylated glycolipid that anchors the lipopolysaccharide to the outer membrane of the cell. In Rhizobium rhizogenes (strain K84 / ATCC BAA-868) (Agrobacterium radiobacter), this protein is UDP-3-O-acylglucosamine N-acyltransferase.